The chain runs to 161 residues: Transcriptional repressor NrdR (161 aa).

A zinc finger lies at 3–34 (CPFCGKYDTKVTDSRLVAEGDQVRRRRQCNDC). One can recognise an ATP-cone domain in the interval 49 to 139 (PRVIKGDGSR…VYRRFQDLDE (91 aa)).

This sequence belongs to the NrdR family. Requires Zn(2+) as cofactor.

Its function is as follows. Negatively regulates transcription of bacterial ribonucleotide reductase nrd genes and operons by binding to NrdR-boxes. This is Transcriptional repressor NrdR from Chromohalobacter salexigens (strain ATCC BAA-138 / DSM 3043 / CIP 106854 / NCIMB 13768 / 1H11).